A 220-amino-acid polypeptide reads, in one-letter code: ATP-dependent dethiobiotin synthetase BioD (220 aa).

13–18 (EVGKTV) is an ATP binding site. Residue threonine 17 coordinates Mg(2+). Residue lysine 38 is part of the active site. Position 42 (serine 42) interacts with substrate. ATP contacts are provided by residues aspartate 55, 116 to 119 (EGAG), 176 to 177 (NR), and asparagine 212. Residues aspartate 55 and glutamate 116 each contribute to the Mg(2+) site.

The protein belongs to the dethiobiotin synthetase family. In terms of assembly, homodimer. The cofactor is Mg(2+).

The protein resides in the cytoplasm. It carries out the reaction (7R,8S)-7,8-diammoniononanoate + CO2 + ATP = (4R,5S)-dethiobiotin + ADP + phosphate + 3 H(+). It participates in cofactor biosynthesis; biotin biosynthesis; biotin from 7,8-diaminononanoate: step 1/2. In terms of biological role, catalyzes a mechanistically unusual reaction, the ATP-dependent insertion of CO2 between the N7 and N8 nitrogen atoms of 7,8-diaminopelargonic acid (DAPA, also called 7,8-diammoniononanoate) to form a ureido ring. In Photobacterium profundum (strain SS9), this protein is ATP-dependent dethiobiotin synthetase BioD.